A 318-amino-acid polypeptide reads, in one-letter code: Olfactory receptor 13C7 (318 aa).

Residues 1–27 (MVSANQTASVTEFILLGLSAHPKLEKT) are Extracellular-facing. A helical transmembrane segment spans residues 28-48 (FFVLILLMYLVILLGNGVLIL). The Cytoplasmic segment spans residues 49-61 (MTVSNSHLHMPMY). Residues 62–82 (FFLGNLSFLDICYTTSSVPLI) form a helical membrane-spanning segment. At 83–100 (LDSFLTPRKTISFSACAV) the chain is on the extracellular side. The chain crosses the membrane as a helical span at residues 101–121 (QMFLSFAMGATECVLLSMMAF). Residues 122 to 181 (DRYVAICNPLRYPVVMSKAAYMPKAAGSWVAGSTASMVQTSLAMRLPFCGDNIINHFTCE) lie on the Cytoplasmic side of the membrane. A helical membrane pass occupies residues 182–202 (ILAVLKLACADISVNVISMGV). At 203 to 205 (TNV) the chain is on the extracellular side. A helical transmembrane segment spans residues 206–226 (IFLGVPVLFISFSYVFIIATI). Residues 227–238 (LRIPSAEGRKKA) are Cytoplasmic-facing. A helical transmembrane segment spans residues 239 to 259 (FSTCSAHLTVVVIFYGTILFM). Over 260-278 (YGKPKSKDPLGADKQDLAD) the chain is Extracellular. The helical transmembrane segment at 279 to 289 (KLISLFYGVVT) threads the bilayer. Topologically, residues 290 to 318 (PMLNPIIYSLRNKDVKAAVRDLIFQKCFA) are cytoplasmic.

Belongs to the G-protein coupled receptor 1 family.

It is found in the cell membrane. Its function is as follows. Odorant receptor. The protein is Olfactory receptor 13C7 of Homo sapiens (Human).